Reading from the N-terminus, the 209-residue chain is MSRSTRYSVAVSAQPETGQIAGRARIANLANILTLLRLVMVPVFLLALFYGGGHHSAARVVAWAIFATACITDRFDGLLARNYGMATEFGAFVDPIADKTLIGSALIGLSMLGDLPWWVTVLILTRELGVTVLRLAVIRRGVIPASWGGKLKTFVQAVAIGLFVLPLSGPLHVAAVVVMAAAILLTVITGVDYVARALRDIGGIRQTAS.

The next 4 helical transmembrane spans lie at 32–52 (ILTL…FYGG), 105–125 (ALIG…LILT), 147–167 (WGGK…VLPL), and 171–191 (LHVA…ITGV).

This sequence belongs to the CDP-alcohol phosphatidyltransferase class-I family.

It localises to the cell membrane. The catalysed reaction is a CDP-1,2-diacyl-sn-glycerol + sn-glycerol 3-phosphate = a 1,2-diacyl-sn-glycero-3-phospho-(1'-sn-glycero-3'-phosphate) + CMP + H(+). Its pathway is lipid metabolism; phospholipid metabolism. Its function is as follows. Probably catalyzes the synthesis of phosphatidylglycerophosphate by transferring a phosphatidyl group from CDP-diacylglycerol to glycerol 3-phosphate. The polypeptide is Probable phosphatidylglycerophosphate synthase (Mycobacterium tuberculosis (strain CDC 1551 / Oshkosh)).